Reading from the N-terminus, the 148-residue chain is 3-dehydroquinate dehydratase (148 aa).

Residue Y23 is the Proton acceptor of the active site. Residues N75, H81, and D88 each coordinate substrate. H101 serves as the catalytic Proton donor. Substrate contacts are provided by residues 102-103 (LS) and R112.

It belongs to the type-II 3-dehydroquinase family. Homododecamer.

The enzyme catalyses 3-dehydroquinate = 3-dehydroshikimate + H2O. It functions in the pathway metabolic intermediate biosynthesis; chorismate biosynthesis; chorismate from D-erythrose 4-phosphate and phosphoenolpyruvate: step 3/7. In terms of biological role, catalyzes a trans-dehydration via an enolate intermediate. This chain is 3-dehydroquinate dehydratase, found in Ectopseudomonas mendocina (strain ymp) (Pseudomonas mendocina).